Here is a 160-residue protein sequence, read N- to C-terminus: Early E3 18.5 kDa glycoprotein (160 aa).

A signal peptide spans 1–17; sequence MIRYIILGLLTLASAHG. Residues 18–124 lie on the Lumenal side of the membrane; the sequence is TTQKVDFKEP…PPQNCVENTG (107 aa). 2 disulfide bridges follow: cysteine 29-cysteine 46 and cysteine 40-cysteine 101. Residues asparagine 30 and asparagine 79 are each glycosylated (N-linked (GlcNAc...) asparagine; by host). The chain crosses the membrane as a helical span at residues 125 to 145; sequence TFCCTAMLITVLALVCTLLYI. Residues 146–160 lie on the Cytoplasmic side of the membrane; it reads KYKSRRSFIEEKKMP. A Di-lysine motif motif is present at residues 157-160; sequence KKMP.

This sequence belongs to the adenoviridae E19 family. Both disulfide bonds are absolutely critical for the interaction with MHC antigens. In terms of processing, N-glycosylated; high-mannose.

The protein localises to the host endoplasmic reticulum membrane. Its function is as follows. Binds and retains class I heavy chains in the endoplasmic reticulum during the early period of virus infection, thereby impairing their transport to the cell surface. Also delays the expression of class I alleles that it cannot affect by direct retention. Binds transporters associated with antigen processing (TAP) and acts as a tapasin inhibitor, preventing class I/TAP association. In consequence, infected cells are masked for immune recognition by cytotoxic T-lymphocytes. This chain is Early E3 18.5 kDa glycoprotein, found in Homo sapiens (Human).